We begin with the raw amino-acid sequence, 277 residues long: WRKY transcription factor 68 (277 aa).

The segment at 51–96 is disordered; that stretch reads TPLMHFPTTPNSSSSEAVNGDDEEEEDGEEQQHKTKKRFKFTKMSR. Residues 58–67 show a composition bias toward polar residues; sequence TTPNSSSSEA. Residues 69–79 show a composition bias toward acidic residues; sequence NGDDEEEEDGE. The segment covering 84–96 has biased composition (basic residues); that stretch reads KTKKRFKFTKMSR. Positions 112–177 form a DNA-binding region, WRKY; it reads SEVLHLDDGY…YEGQHTHPRP (66 aa). The disordered stretch occupies residues 183-206; the sequence is KEGSSPSNGSASRAHIGLPTLPPQ.

Belongs to the WRKY group II-c family.

It localises to the nucleus. Transcription factor. Interacts specifically with the W box (5'-(T)TGAC[CT]-3'), a frequently occurring elicitor-responsive cis-acting element. This chain is WRKY transcription factor 68 (WRKY68), found in Arabidopsis thaliana (Mouse-ear cress).